Reading from the N-terminus, the 533-residue chain is DNA primase large subunit (533 aa).

[4Fe-4S] cluster-binding residues include cysteine 298, cysteine 377, cysteine 393, and cysteine 433. Residues 466–492 (RQKRANGSAPPKARIRPDIKGHGDRSM) form a disordered region. Residues 480–490 (IRPDIKGHGDR) are compositionally biased toward basic and acidic residues.

This sequence belongs to the eukaryotic-type primase large subunit family. In terms of assembly, heterodimer of a catalytic subunit Prim1 and a regulatory subunit Prim2, also known as the DNA primase complex. Component of the alpha DNA polymerase complex (also known as the alpha DNA polymerase-primase complex) consisting of four subunits: the catalytic subunit PolA1, the regulatory subunit PolA2, and the primase complex subunits Prim1 and Prim2 respectively. PolA1 associates with the DNA primase complex before association with PolA2. It depends on [4Fe-4S] cluster as a cofactor. In terms of tissue distribution, expressed in embryos (at protein level).

Regulatory subunit of the DNA primase complex and component of the DNA polymerase alpha complex (also known as the alpha DNA polymerase-primase complex) which play an essential role in the initiation of DNA synthesis. During the S phase of the cell cycle, the DNA polymerase alpha complex (composed of a catalytic subunit PolA1, an accessory subunit PolA2 and two primase subunits, the catalytic subunit Prim1 and the regulatory subunit Prim2) is recruited to DNA at the replicative forks. The primase subunit of the polymerase alpha complex initiates DNA synthesis by oligomerising short RNA primers on both leading and lagging strands. These primers are initially extended by the polymerase alpha catalytic subunit and subsequently transferred to polymerase delta and polymerase epsilon for processive synthesis on the lagging and leading strand, respectively. In the primase complex, both subunits are necessary for the initial di-nucleotide formation, but the extension of the primer depends only on the catalytic subunit. Stabilizes and modulates the activity of the catalytic subunit. The polypeptide is DNA primase large subunit (Drosophila melanogaster (Fruit fly)).